A 667-amino-acid chain; its full sequence is UvrABC system protein B (667 aa).

The Helicase ATP-binding domain maps to 31-414; that stretch reads AGIESGEKEQ…EMDRTKHVVQ (384 aa). 44–51 is an ATP binding site; it reads GATGTGKT. A Beta-hairpin motif is present at residues 97–120; sequence YYDYYQPEAYVPSSDTYIEKDSAI. One can recognise a Helicase C-terminal domain in the interval 435 to 597; that stretch reads QIDDLVGEIN…ITPHTIKKAI (163 aa). A UVR domain is found at 630 to 665; that stretch reads LDMISKLEEQMKTAAKKLDFEQAATLRDTVMELKAQ.

It belongs to the UvrB family. As to quaternary structure, forms a heterotetramer with UvrA during the search for lesions. Interacts with UvrC in an incision complex.

The protein resides in the cytoplasm. Functionally, the UvrABC repair system catalyzes the recognition and processing of DNA lesions. A damage recognition complex composed of 2 UvrA and 2 UvrB subunits scans DNA for abnormalities. Upon binding of the UvrA(2)B(2) complex to a putative damaged site, the DNA wraps around one UvrB monomer. DNA wrap is dependent on ATP binding by UvrB and probably causes local melting of the DNA helix, facilitating insertion of UvrB beta-hairpin between the DNA strands. Then UvrB probes one DNA strand for the presence of a lesion. If a lesion is found the UvrA subunits dissociate and the UvrB-DNA preincision complex is formed. This complex is subsequently bound by UvrC and the second UvrB is released. If no lesion is found, the DNA wraps around the other UvrB subunit that will check the other stand for damage. This is UvrABC system protein B from Lactiplantibacillus plantarum (strain ATCC BAA-793 / NCIMB 8826 / WCFS1) (Lactobacillus plantarum).